Reading from the N-terminus, the 61-residue chain is MAKKSLRVKQARPQKFKVRAYNRCLRCGRPHGYMRKFGLCRICFRELAYKGELPGIVKASW.

The Zn(2+) site is built by Cys24, Cys27, Cys40, and Cys43.

The protein belongs to the universal ribosomal protein uS14 family. Zinc-binding uS14 subfamily. As to quaternary structure, part of the 30S ribosomal subunit. Contacts proteins S3 and S10. Zn(2+) serves as cofactor.

Functionally, binds 16S rRNA, required for the assembly of 30S particles and may also be responsible for determining the conformation of the 16S rRNA at the A site. The polypeptide is Small ribosomal subunit protein uS14 (Moorella thermoacetica (strain ATCC 39073 / JCM 9320)).